The following is a 169-amino-acid chain: Ribosome maturation factor RimM (169 aa).

Positions Glu-94–Leu-167 constitute a PRC barrel domain.

Belongs to the RimM family. Binds ribosomal protein uS19.

The protein resides in the cytoplasm. In terms of biological role, an accessory protein needed during the final step in the assembly of 30S ribosomal subunit, possibly for assembly of the head region. Essential for efficient processing of 16S rRNA. May be needed both before and after RbfA during the maturation of 16S rRNA. It has affinity for free ribosomal 30S subunits but not for 70S ribosomes. The chain is Ribosome maturation factor RimM from Listeria welshimeri serovar 6b (strain ATCC 35897 / DSM 20650 / CCUG 15529 / CIP 8149 / NCTC 11857 / SLCC 5334 / V8).